The primary structure comprises 199 residues: MGPDFEIERELGGLVAGVDEVGRGPWAGPVTACAVVLDPMQVPDGLNDSKKLSEARRDALAMQILRVADVSLGWASVEEIDALNIRQATFLAMRRAMDGLTTPPTHALIDGNAIPPGLSCPATCVVKGDGRSVSIAAASIVAKVRRDALMKELAVMHPGYGWETNMGYGTAKHAAGLHHLGVTQYHRRSFAPIAKILCG.

An RNase H type-2 domain is found at 13-199 (GLVAGVDEVG…FAPIAKILCG (187 aa)). Positions 19, 20, and 110 each coordinate a divalent metal cation.

Belongs to the RNase HII family. It depends on Mn(2+) as a cofactor. Mg(2+) is required as a cofactor.

The protein localises to the cytoplasm. The enzyme catalyses Endonucleolytic cleavage to 5'-phosphomonoester.. Endonuclease that specifically degrades the RNA of RNA-DNA hybrids. This Jannaschia sp. (strain CCS1) protein is Ribonuclease HII.